Here is a 365-residue protein sequence, read N- to C-terminus: GTPase Obg (365 aa).

One can recognise an Obg domain in the interval methionine 1–leucine 159. One can recognise an OBG-type G domain in the interval alanine 160–glutamine 334. GTP contacts are provided by residues glycine 166–serine 173, phenylalanine 191–histidine 195, aspartate 213–glycine 216, asparagine 284–aspartate 287, and serine 315–leucine 317. Positions 173 and 193 each coordinate Mg(2+).

Belongs to the TRAFAC class OBG-HflX-like GTPase superfamily. OBG GTPase family. Monomer. It depends on Mg(2+) as a cofactor.

The protein localises to the cytoplasm. In terms of biological role, an essential GTPase which binds GTP, GDP and possibly (p)ppGpp with moderate affinity, with high nucleotide exchange rates and a fairly low GTP hydrolysis rate. Plays a role in control of the cell cycle, stress response, ribosome biogenesis and in those bacteria that undergo differentiation, in morphogenesis control. The chain is GTPase Obg from Cupriavidus necator (strain ATCC 17699 / DSM 428 / KCTC 22496 / NCIMB 10442 / H16 / Stanier 337) (Ralstonia eutropha).